The sequence spans 337 residues: MKFVDSASIFVHAGDGGKGCVSFRREKFVPKGGPDGGDGGRGGHVWLRTNRQLTTLLDFKYKKKYIAVRGVHGQGARKTGRDGADVVIDVPCGTIVRNGETNEIIADLTGEDQEILIARGGKGGRGNQHFATPTRQAPRYAEPGQKGELLMLNMELKLMADVGLVGFPNAGKSTLISVISAAKPKIADYPFTTLVPNLGIVRYEEYKSFVMADIPGIIEGAAEGKGLGLQFLRHIERTKILAILIAADSPDIADEYHTLLGELEKFEKELLDKPRLVVVTKMDIAAEDLEIPTLEEGVRVLSISAVSGQGLKELKDELWREVSGRIRAAEPLDESLG.

Residues 1 to 159 form the Obg domain; it reads MKFVDSASIF…LMLNMELKLM (159 aa). Residues 160–323 enclose the OBG-type G domain; the sequence is ADVGLVGFPN…LKDELWREVS (164 aa). GTP contacts are provided by residues 166-173, 191-195, 213-216, 280-283, and 304-306; these read GFPNAGKS, FTTLV, DIPG, TKMD, and SAV. Mg(2+) is bound by residues serine 173 and threonine 193.

The protein belongs to the TRAFAC class OBG-HflX-like GTPase superfamily. OBG GTPase family. As to quaternary structure, monomer. Mg(2+) serves as cofactor.

It is found in the cytoplasm. Functionally, an essential GTPase which binds GTP, GDP and possibly (p)ppGpp with moderate affinity, with high nucleotide exchange rates and a fairly low GTP hydrolysis rate. Plays a role in control of the cell cycle, stress response, ribosome biogenesis and in those bacteria that undergo differentiation, in morphogenesis control. In Pelodictyon phaeoclathratiforme (strain DSM 5477 / BU-1), this protein is GTPase Obg.